A 562-amino-acid polypeptide reads, in one-letter code: NAD-dependent malic enzyme (562 aa).

Tyrosine 101 (proton donor) is an active-site residue. NAD(+) is bound at residue arginine 154. The active-site Proton acceptor is lysine 172. Glutamate 243, aspartate 244, and aspartate 267 together coordinate a divalent metal cation. Positions 267 and 415 each coordinate NAD(+).

It belongs to the malic enzymes family. As to quaternary structure, homotetramer. It depends on Mg(2+) as a cofactor. Mn(2+) is required as a cofactor.

The catalysed reaction is (S)-malate + NAD(+) = pyruvate + CO2 + NADH. It carries out the reaction oxaloacetate + H(+) = pyruvate + CO2. The protein is NAD-dependent malic enzyme of Shewanella pealeana (strain ATCC 700345 / ANG-SQ1).